Reading from the N-terminus, the 195-residue chain is HTH-type transcriptional regulator BetI (195 aa).

Positions 8–68 (SIRRRQLIDA…ATMRDITSQL (61 aa)) constitute an HTH tetR-type domain. The segment at residues 31-50 (TIAQIARRAGVSTGIISHYF) is a DNA-binding region (H-T-H motif).

It participates in amine and polyamine biosynthesis; betaine biosynthesis via choline pathway [regulation]. Functionally, repressor involved in the biosynthesis of the osmoprotectant glycine betaine. It represses transcription of the choline transporter BetT and the genes of BetAB involved in the synthesis of glycine betaine. The chain is HTH-type transcriptional regulator BetI from Escherichia coli (strain K12 / DH10B).